Consider the following 143-residue polypeptide: Large ribosomal subunit protein bL17 (143 aa).

This sequence belongs to the bacterial ribosomal protein bL17 family. As to quaternary structure, part of the 50S ribosomal subunit. Contacts protein L32.

This is Large ribosomal subunit protein bL17 from Bartonella quintana (strain Toulouse) (Rochalimaea quintana).